Consider the following 307-residue polypeptide: Leucine-rich repeat-containing protein 59 (307 aa).

Topologically, residues 1–247 (MARANGRSQN…LAQRQSRLRK (247 aa)) are cytoplasmic. LRR repeat units follow at residues 10 to 31 (NLRDKLDGNELDLSLSDLSEVP), 40 to 61 (KATALDLSCNKLTTLPDDFCNL), 63 to 84 (HIVRLDLSKNQIVQLPSEFGRL), 86 to 107 (NLQHLDLLQNHLMSLPVSFAQL), and 109 to 131 (SLKWLDLKDNPLKPDLAKVAGDC). Residues 156–222 (EIELQRKLQL…LNSNKKAEEE (67 aa)) are a coiled coil. The segment at 170–238 (KKKLEAKQRV…RMATPKEKKL (69 aa)) is disordered. 2 stretches are compositionally biased toward basic and acidic residues: residues 174-187 (EAKQRVKEEQEREM) and 194-238 (QQKE…EKKL). Residues 248–268 (IACILLFGLLVVLLVVVACRF) form a helical membrane-spanning segment. Topologically, residues 269–307 (TDLKAINMCTSVNAIYKETLSALHSNPVLERFLQDPSSQ) are lumenal.

As to quaternary structure, interacts with SGO1.

Its subcellular location is the microsome membrane. It localises to the endoplasmic reticulum membrane. It is found in the nucleus envelope. Functionally, required for nuclear import of FGF1. The polypeptide is Leucine-rich repeat-containing protein 59 (lrrc59) (Xenopus laevis (African clawed frog)).